Consider the following 403-residue polypeptide: Argininosuccinate synthase (403 aa).

ATP-binding positions include 13–21 (AYSGGLDTS) and alanine 40. The L-citrulline site is built by tyrosine 92 and serine 97. Glycine 122 provides a ligand contact to ATP. L-aspartate-binding residues include threonine 124, asparagine 128, and aspartate 129. Residue asparagine 128 coordinates L-citrulline. Positions 132, 181, 190, 266, and 278 each coordinate L-citrulline.

Belongs to the argininosuccinate synthase family. Type 1 subfamily. Homotetramer.

The protein localises to the cytoplasm. It catalyses the reaction L-citrulline + L-aspartate + ATP = 2-(N(omega)-L-arginino)succinate + AMP + diphosphate + H(+). It participates in amino-acid biosynthesis; L-arginine biosynthesis; L-arginine from L-ornithine and carbamoyl phosphate: step 2/3. In Aliivibrio fischeri (strain MJ11) (Vibrio fischeri), this protein is Argininosuccinate synthase.